We begin with the raw amino-acid sequence, 955 residues long: 2-oxoglutarate dehydrogenase E1 component (955 aa).

This sequence belongs to the alpha-ketoglutarate dehydrogenase family. Homodimer. Part of the 2-oxoglutarate dehydrogenase (OGDH) complex composed of E1 (2-oxoglutarate dehydrogenase), E2 (dihydrolipoamide succinyltransferase) and E3 (dihydrolipoamide dehydrogenase); the complex contains multiple copies of the three enzymatic components (E1, E2 and E3). It depends on thiamine diphosphate as a cofactor.

The enzyme catalyses N(6)-[(R)-lipoyl]-L-lysyl-[protein] + 2-oxoglutarate + H(+) = N(6)-[(R)-S(8)-succinyldihydrolipoyl]-L-lysyl-[protein] + CO2. Functionally, E1 component of the 2-oxoglutarate dehydrogenase (OGDH) complex which catalyzes the decarboxylation of 2-oxoglutarate, the first step in the conversion of 2-oxoglutarate to succinyl-CoA and CO(2). In Bacillus cereus (strain B4264), this protein is 2-oxoglutarate dehydrogenase E1 component.